Here is a 290-residue protein sequence, read N- to C-terminus: Lipoyl synthase (290 aa).

Residues cysteine 34, cysteine 39, cysteine 45, cysteine 60, cysteine 64, cysteine 67, and serine 273 each coordinate [4Fe-4S] cluster. In terms of domain architecture, Radical SAM core spans 46-262 (WNKRHATVMI…KYIAYSKGFL (217 aa)).

Belongs to the radical SAM superfamily. Lipoyl synthase family. [4Fe-4S] cluster serves as cofactor.

It localises to the cytoplasm. The enzyme catalyses [[Fe-S] cluster scaffold protein carrying a second [4Fe-4S](2+) cluster] + N(6)-octanoyl-L-lysyl-[protein] + 2 oxidized [2Fe-2S]-[ferredoxin] + 2 S-adenosyl-L-methionine + 4 H(+) = [[Fe-S] cluster scaffold protein] + N(6)-[(R)-dihydrolipoyl]-L-lysyl-[protein] + 4 Fe(3+) + 2 hydrogen sulfide + 2 5'-deoxyadenosine + 2 L-methionine + 2 reduced [2Fe-2S]-[ferredoxin]. The protein operates within protein modification; protein lipoylation via endogenous pathway; protein N(6)-(lipoyl)lysine from octanoyl-[acyl-carrier-protein]: step 2/2. In terms of biological role, catalyzes the radical-mediated insertion of two sulfur atoms into the C-6 and C-8 positions of the octanoyl moiety bound to the lipoyl domains of lipoate-dependent enzymes, thereby converting the octanoylated domains into lipoylated derivatives. This Wolbachia pipientis subsp. Culex pipiens (strain wPip) protein is Lipoyl synthase.